Here is a 1134-residue protein sequence, read N- to C-terminus: Error-prone DNA polymerase (1134 aa).

Residues 1–33 (MSYHNPPIPWRELEGRISGRPAPHGHQESHADQ) form a disordered region.

This sequence belongs to the DNA polymerase type-C family. DnaE2 subfamily.

The protein resides in the cytoplasm. The enzyme catalyses DNA(n) + a 2'-deoxyribonucleoside 5'-triphosphate = DNA(n+1) + diphosphate. Functionally, DNA polymerase involved in damage-induced mutagenesis and translesion synthesis (TLS). It is not the major replicative DNA polymerase. This Cutibacterium acnes (strain DSM 16379 / KPA171202) (Propionibacterium acnes) protein is Error-prone DNA polymerase.